We begin with the raw amino-acid sequence, 182 residues long: IQ domain-containing protein F1 (182 aa).

Composition is skewed to basic and acidic residues over residues 1–10 (MGEEQQKPEE) and 31–43 (ETEKAKSKKKQEL). The segment at 1–43 (MGEEQQKPEELNAPTDDAPQEKQQPADLSSETEKAKSKKKQEL) is disordered. 2 IQ domains span residues 45–74 (EKDQVVKIQAWWRGTLVRRSLLHAALSAWI) and 101–130 (EQWAVVRLQSWIRMWRIRRRYCRLLKAVRT).

Interacts with calmodulin. As to expression, specifically expressed in testes and mature spermatozoa (at protein level).

The protein resides in the cytoplasmic vesicle. Its subcellular location is the secretory vesicle. The protein localises to the acrosome. Functionally, involved in sperm capacitation and acrosome reaction. In Mus musculus (Mouse), this protein is IQ domain-containing protein F1.